Reading from the N-terminus, the 104-residue chain is SPbeta prophage-derived stress response protein SCP1 (104 aa).

The protein resides in the cytoplasm. This chain is SPbeta prophage-derived stress response protein SCP1 (yorD), found in Bacillus subtilis (strain 168).